The chain runs to 214 residues: Probable nicotinate-nucleotide adenylyltransferase (214 aa).

Belongs to the NadD family.

It catalyses the reaction nicotinate beta-D-ribonucleotide + ATP + H(+) = deamido-NAD(+) + diphosphate. Its pathway is cofactor biosynthesis; NAD(+) biosynthesis; deamido-NAD(+) from nicotinate D-ribonucleotide: step 1/1. Functionally, catalyzes the reversible adenylation of nicotinate mononucleotide (NaMN) to nicotinic acid adenine dinucleotide (NaAD). This is Probable nicotinate-nucleotide adenylyltransferase from Rubrobacter xylanophilus (strain DSM 9941 / JCM 11954 / NBRC 16129 / PRD-1).